Here is a 328-residue protein sequence, read N- to C-terminus: Biotin synthase (328 aa).

The region spanning 48-275 (NRIQLSKLLN…KSHVRLTAGR (228 aa)) is the Radical SAM core domain. Residues Cys-63, Cys-67, and Cys-70 each contribute to the [4Fe-4S] cluster site. Cys-107, Cys-138, Cys-198, and Arg-270 together coordinate [2Fe-2S] cluster.

Belongs to the radical SAM superfamily. Biotin synthase family. Homodimer. [4Fe-4S] cluster serves as cofactor. It depends on [2Fe-2S] cluster as a cofactor.

It carries out the reaction (4R,5S)-dethiobiotin + (sulfur carrier)-SH + 2 reduced [2Fe-2S]-[ferredoxin] + 2 S-adenosyl-L-methionine = (sulfur carrier)-H + biotin + 2 5'-deoxyadenosine + 2 L-methionine + 2 oxidized [2Fe-2S]-[ferredoxin]. The protein operates within cofactor biosynthesis; biotin biosynthesis; biotin from 7,8-diaminononanoate: step 2/2. Functionally, catalyzes the conversion of dethiobiotin (DTB) to biotin by the insertion of a sulfur atom into dethiobiotin via a radical-based mechanism. This Brucella ovis (strain ATCC 25840 / 63/290 / NCTC 10512) protein is Biotin synthase.